We begin with the raw amino-acid sequence, 467 residues long: UDP-N-acetylmuramate--L-alanine ligase (467 aa).

Gly114–Thr120 provides a ligand contact to ATP.

Belongs to the MurCDEF family.

The protein resides in the cytoplasm. It carries out the reaction UDP-N-acetyl-alpha-D-muramate + L-alanine + ATP = UDP-N-acetyl-alpha-D-muramoyl-L-alanine + ADP + phosphate + H(+). Its pathway is cell wall biogenesis; peptidoglycan biosynthesis. Its function is as follows. Cell wall formation. This is UDP-N-acetylmuramate--L-alanine ligase from Bradyrhizobium sp. (strain BTAi1 / ATCC BAA-1182).